The sequence spans 852 residues: Potassium voltage-gated channel subfamily KQT member 2 (852 aa).

The Cytoplasmic portion of the chain corresponds to 1–90; that stretch reads MVQKSRNGGV…LYNVLERPRG (90 aa). Ser-52 carries the post-translational modification Phosphoserine; by PKA. Residues 91-113 traverse the membrane as a helical segment; sequence WAFIYHAYVFLLVFSCLVLSVFS. Topologically, residues 114-123 are extracellular; the sequence is TIKEYEKSSE. Residues 124–145 traverse the membrane as a helical segment; the sequence is GALYILEIVTIVVFGVEYFVRI. Topologically, residues 146–163 are cytoplasmic; the sequence is WAAGCCCRYRGWRGRLKF. The helical transmembrane segment at 164 to 183 threads the bilayer; that stretch reads ARKPFCVIDIMVLIASIAVL. Topologically, residues 184 to 196 are extracellular; the sequence is AAGSQGNVFATSA. The helical; Voltage-sensor transmembrane segment at 197–215 threads the bilayer; that stretch reads LRSLRFLQILRMIRMDRRG. Arg-214 contributes to the a 1,2-diacyl-sn-glycero-3-phospho-(1D-myo-inositol-4,5-bisphosphate) binding site. Residues 216 to 227 lie on the Cytoplasmic side of the membrane; it reads GTWKLLGSVVYA. Residues 222-323 form a mediates interaction with SLC5A3 region; it reads GSVVYAHSKE…SGFALKVQEQ (102 aa). Residues 228–253 form a helical membrane-spanning segment; sequence HSKELVTAWYIGFLCLILASFLVYLA. Lys-230 is a binding site for a 1,2-diacyl-sn-glycero-3-phospho-(1D-myo-inositol-4,5-bisphosphate). Over 254–263 the chain is Extracellular; that stretch reads EKGENDHFDT. Residues 264–276 constitute an intramembrane region (pore-forming); that stretch reads YADALWWGLITLT. Residues 277 to 282 carry the Selectivity filter motif; it reads TIGYGD. The Extracellular portion of the chain corresponds to 277–287; it reads TIGYGDKYPQT. The chain crosses the membrane as a helical span at residues 288-314; that stretch reads WNGRLLAATFTLIGVSFFALPAGILGS. The Cytoplasmic portion of the chain corresponds to 315–852; it reads GFALKVQEQH…GDVAWAGPRK (538 aa). Residues 317-522 are mediates interaction with calmodulin; the sequence is ALKVQEQHRQ…EDLTPGLKVS (206 aa). Lys-327 serves as a coordination point for a 1,2-diacyl-sn-glycero-3-phospho-(1D-myo-inositol-4,5-bisphosphate). The disordered stretch occupies residues 404-469; the sequence is TFRKEPQPEP…SKVPKSWSFG (66 aa). Positions 440–457 are enriched in polar residues; it reads PQAQTVRRSPSADQSLDD. Phosphoserine is present on residues Ser-448, Ser-450, Ser-454, Ser-458, Ser-460, and Ser-489. Disordered regions lie at residues 579-601, 643-662, and 672-718; these read GPTI…EDPS, GAKE…SRDH, and IVRS…DHGS. The segment covering 583–592 has biased composition (basic and acidic residues); that stretch reads TDKDRTKGPA. Ser-655 is modified (phosphoserine). 2 positions are modified to phosphoserine: Ser-781 and Ser-783. A disordered region spans residues 818–852; it reads ESDTDSDLCTPCGPPPRSATGEGPFGDVAWAGPRK.

This sequence belongs to the potassium channel family. KQT (TC 1.A.1.15) subfamily. Kv7.2/KCNQ2 sub-subfamily. In terms of assembly, heterotetramer with KCNQ3; forms heterotetrameric M-channel responsible for the M-current. Homotetrameric; forms a functional homotetrameric channel resulting in the expression of a small M-current. Interacts with calmodulin; the interaction is calcium-independent, constitutive and participates in the proper assembly of a functional M-channel. May associate with KCNE2. Interacts with IQCJ-SCHIP1. Interacts (via the pore module) with SLC5A3/SMIT1; forms a coregulatory complex that alters ion selectivity, voltage dependence and gating kinetics of the channel. Interacts with AKAP5; the interaction may help KCNQ2 channel complex to retain calcium-bound calmodulin. Post-translationally, KCNQ2/KCNQ3 heteromeric current can be increased by intracellular cyclic AMP, an effect that depends on phosphorylation of Ser-52 in the N-terminal region. In terms of processing, KCNQ2/KCNQ3 are ubiquitinated by NEDD4L. Ubiquitination leads to protein degradation. Degradation induced by NEDD4L is inhibited by USP36. In terms of tissue distribution, expressed in brain and sympathetic ganglia. In brain, expressed in cortex, hippocampus, and cerebellum. In sympathetic ganglia, expressed at lower levels in celiac ganglia and superior mesenteric ganglia than in superior cervical ganglia.

It is found in the cell membrane. The catalysed reaction is K(+)(in) = K(+)(out). It carries out the reaction Rb(+)(in) = Rb(+)(out). It catalyses the reaction Cs(+)(in) = Cs(+)(out). The enzyme catalyses Na(+)(in) = Na(+)(out). Phosphatidylinositol-4,5-bisphosphate (PIP2) potentiates the activation of KCNQ channels by enhancing the electro-mechanical coupling of the voltage-sensing domain (VSD) and the pore-forming domain (PD). In the closed state of the channel, PIP2 is anchored at the S2-S3 loop; upon channel activation, PIP2 interacts with the S4-S5 linker and is involved in channel gating. Calcium suppresses KCNQ2 and KCNQ2-KCNQ3 channel currents, with calcium-bound calmodulin inducing a change in channel configuration which leads to the reduction of channel affinity for PIP2 and subsequent current suppression. Functionally, pore-forming subunit of the voltage-gated potassium (Kv) M-channel which is responsible for the M-current, a key controller of neuronal excitability. M-channel is composed of pore-forming subunits KCNQ2 and KCNQ3 assembled as heterotetramers. The native M-current has a slowly activating and deactivating potassium conductance which plays a critical role in determining the subthreshold electrical excitability of neurons as well as the responsiveness to synaptic inputs. M-channel is selectively permeable in vitro to other cations besides potassium, in decreasing order of affinity K(+) &gt; Rb(+) &gt; Cs(+) &gt; Na(+). M-channel association with SLC5A3/SMIT1 alters channel ion selectivity, increasing Na(+) and Cs(+) permeation relative to K(+). Suppressed by activation of the muscarinic acetylcholine receptor CHRM1. In Rattus norvegicus (Rat), this protein is Potassium voltage-gated channel subfamily KQT member 2.